The following is a 548-amino-acid chain: Nonribosomal peptide synthetase 8 (548 aa).

The region spanning 1–77 is the Carrier domain; it reads MNSLDQWRDT…QLRGENRSGP (77 aa). Position 35 is an O-(pantetheine 4'-phosphoryl)serine (Ser-35). The condensation stretch occupies residues 122–537; sequence MAPISSIQEF…FKSLIAELAA (416 aa).

This sequence belongs to the NRP synthetase family.

It participates in mycotoxin biosynthesis. Functionally, nonribosomal peptide synthetase; part of the gene cluster that mediates the biosynthesis of fumonisins B1 (FB1), B2 (FB2), B3 (FB3), and B4 (FB4), which are carcinogenic mycotoxins. Within the pathway FUM14 catalyzes esterification of CoA-activated tricarballylic acid to the C-14 and C-15 hydroxyls of the fumonisin backbone. The biosynthesis starts with the FUM1-catalyzed carbon chain assembly from one molecule of acetyl-CoA, eight molecules of malonyl-CoA, and two molecules of methionine (in S-adenosyl form). The C18 polyketide chain is released from the enzyme by a nucleophilic attack of a carbanion, which is derived from R-carbon of alanine by decarboxylation, on the carbonyl carbon of polyketide acyl chain. This step is catalyzed by the pyridoxal 5'-phosphate-dependent aminoacyl transferase FUM8. The resultant 3-keto intermediate is then stereospecifically reduced to a 3-hydroxyl product by reductase FUM13. Subsequent oxidations at C-10 by the cytochrome P450 monooxygenase FUM2, C-14 and C-15 by FUM6, FUM12 or FUM15, tricarballylic esterification of the hydroxyl groups on C-14 and C-15 by acyltransferase FUM14, and C-5 hydroxylation by 2-keto-glutarate-dependent dioxygenase FUM3 furnish the biosynthesis of fumonisins. The tricarballylic moieties are most likely derived from the citric acid cycle, and their addition to the carbon backbone may involve FUM7, FUM10, FUM11 and FUM14. This chain is Nonribosomal peptide synthetase 8, found in Gibberella moniliformis (strain M3125 / FGSC 7600) (Maize ear and stalk rot fungus).